The primary structure comprises 312 residues: Ribosomal RNA small subunit methyltransferase H (312 aa).

Residues 32–34 (AGH), Asp51, Phe78, Asp99, and Gln106 each bind S-adenosyl-L-methionine.

It belongs to the methyltransferase superfamily. RsmH family.

Its subcellular location is the cytoplasm. The enzyme catalyses cytidine(1402) in 16S rRNA + S-adenosyl-L-methionine = N(4)-methylcytidine(1402) in 16S rRNA + S-adenosyl-L-homocysteine + H(+). Its function is as follows. Specifically methylates the N4 position of cytidine in position 1402 (C1402) of 16S rRNA. This is Ribosomal RNA small subunit methyltransferase H from Exiguobacterium sibiricum (strain DSM 17290 / CCUG 55495 / CIP 109462 / JCM 13490 / 255-15).